We begin with the raw amino-acid sequence, 296 residues long: tRNA pseudouridine synthase B (296 aa).

Asp-38 functions as the Nucleophile in the catalytic mechanism.

This sequence belongs to the pseudouridine synthase TruB family. Type 1 subfamily.

The catalysed reaction is uridine(55) in tRNA = pseudouridine(55) in tRNA. Responsible for synthesis of pseudouridine from uracil-55 in the psi GC loop of transfer RNAs. The polypeptide is tRNA pseudouridine synthase B (Ehrlichia ruminantium (strain Gardel)).